Here is an 815-residue protein sequence, read N- to C-terminus: Leucine--tRNA ligase (815 aa).

A 'HIGH' region motif is present at residues 42 to 52 (PYPSGRLHMGH). Residues 574–578 (KMSKS) carry the 'KMSKS' region motif. Lys577 contacts ATP.

The protein belongs to the class-I aminoacyl-tRNA synthetase family.

The protein localises to the cytoplasm. The enzyme catalyses tRNA(Leu) + L-leucine + ATP = L-leucyl-tRNA(Leu) + AMP + diphosphate. This chain is Leucine--tRNA ligase, found in Alcanivorax borkumensis (strain ATCC 700651 / DSM 11573 / NCIMB 13689 / SK2).